Here is a 672-residue protein sequence, read N- to C-terminus: Nuclear RNA export factor 1 (672 aa).

Disordered regions lie at residues 1-52 and 73-101; these read MPKR…SFKP and DEDD…IPRG. Residues 40-49 are compositionally biased toward basic residues; that stretch reads RKDRNKRRVS. In terms of domain architecture, RRM spans 113-193; it reads WYQVTLQNAQ…PRVRSGIPLV (81 aa). 4 LRR repeats span residues 255 to 280, 281 to 304, 305 to 332, and 333 to 360; these read DLEA…KRLP, NLKI…LRNL, SILE…EVRR, and KFPK…GRLL. Positions 375–529 constitute an NTF2 domain; sequence VVRQFLDQYF…FCIRNETIFI (155 aa). Positions 541 to 564 are disordered; it reads KRSQHQPAPGAMPSTSSAVTSPQA. Polar residues predominate over residues 553–563; the sequence is PSTSSAVTSPQ. Residue Ser-561 is modified to Phosphoserine. One can recognise a TAP-C domain in the interval 618-672; that stretch reads STKMQMIEAMSAQSQMNVIWSRKCLEETNWDFNHAAFVFEKLFKENKIPPEAFMK.

It belongs to the NXF family. In terms of assembly, interacts with Nxt1. Interacts with ZC3H3. Forms a complex with Nup358/RanBP2, RanGAP and Nxt1. Interacts with Nup54 and Nup58. Interacts with Orc3 and Hpr1. Expressed ubiquitously.

It localises to the nucleus. The protein localises to the nucleoplasm. Its subcellular location is the cytoplasm. It is found in the nucleus envelope. In terms of biological role, mediates the export of the majority of mRNAs from the nucleus to the cytoplasm. In ovarian follicle cells, plays a role in transposable element silencing regulation by enabling the nuclear export of flamenco (flam) transcripts and subsequent piRNA biogenesis. This chain is Nuclear RNA export factor 1, found in Drosophila melanogaster (Fruit fly).